A 426-amino-acid chain; its full sequence is Serine--tRNA ligase (426 aa).

231–233 serves as a coordination point for L-serine; the sequence is TAE. ATP contacts are provided by residues 262 to 264 and valine 278; that span reads RRE. An L-serine-binding site is contributed by glutamate 285. Residue 349-352 participates in ATP binding; sequence EVSS. Serine 384 serves as a coordination point for L-serine.

This sequence belongs to the class-II aminoacyl-tRNA synthetase family. Type-1 seryl-tRNA synthetase subfamily. In terms of assembly, homodimer. The tRNA molecule binds across the dimer.

Its subcellular location is the cytoplasm. The catalysed reaction is tRNA(Ser) + L-serine + ATP = L-seryl-tRNA(Ser) + AMP + diphosphate + H(+). It catalyses the reaction tRNA(Sec) + L-serine + ATP = L-seryl-tRNA(Sec) + AMP + diphosphate + H(+). Its pathway is aminoacyl-tRNA biosynthesis; selenocysteinyl-tRNA(Sec) biosynthesis; L-seryl-tRNA(Sec) from L-serine and tRNA(Sec): step 1/1. Functionally, catalyzes the attachment of serine to tRNA(Ser). Is also able to aminoacylate tRNA(Sec) with serine, to form the misacylated tRNA L-seryl-tRNA(Sec), which will be further converted into selenocysteinyl-tRNA(Sec). This Chlamydia felis (strain Fe/C-56) (Chlamydophila felis) protein is Serine--tRNA ligase.